The chain runs to 366 residues: Nodulation protein NolL (366 aa).

The next 9 helical transmembrane spans lie at 27–47, 62–82, 98–118, 140–160, 164–184, 212–232, 253–273, 286–306, and 324–344; these read FVKG…LVIY, IYMF…SGTI, LLIP…AAFF, FLWA…FNLL, ILCA…IVPL, HKSL…LDWG, VLLM…SLFH, LVAV…GAVF, and IVVA…VLWI.

It belongs to the acyltransferase 3 family.

The protein localises to the cell membrane. Functionally, thought to be an acetyltransferase that modifies the fucose of the nod factor. This is Nodulation protein NolL (nolL) from Sinorhizobium fredii (strain NBRC 101917 / NGR234).